The primary structure comprises 432 residues: Repulsive guidance molecule A (432 aa).

The N-terminal stretch at 1 to 29 (MGRGAGSTALGLFQILPVFLCIFPPVTSP) is a signal peptide. Positions 30–149 (CKILKCNSEF…NYTHCGLFGD (120 aa)) are cleaved as a propeptide — removed in mature form. A glycan (N-linked (GlcNAc...) asparagine) is linked at asparagine 96. The segment at 99 to 122 (KDGPTSQPRLRTLPPGDSQERSDS) is disordered. 2 disulfide bridges follow: cysteine 126-cysteine 207 and cysteine 144-cysteine 296. Asparagine 140 carries an N-linked (GlcNAc...) asparagine glycan. A lipid anchor (GPI-anchor amidated asparagine) is attached at asparagine 404. A propeptide spans 405–432 (AAPSEHPWALPALWVALLSLSQCWLGLL) (removed in mature form).

The protein belongs to the repulsive guidance molecule (RGM) family. In terms of processing, autocatalytically cleaved at low pH; the two chains remain linked via two disulfide bonds.

The protein resides in the cell membrane. In terms of biological role, acts as an axon-specific repulsive guidance molecule in the retinotectal system. Repulsive for a subset of axons of the temporal half of the retina. Provides thus positional information for the temporal axons invading the optic tectum in the stratum opticum. In Gallus gallus (Chicken), this protein is Repulsive guidance molecule A (RGMA).